The primary structure comprises 150 residues: 3-hydroxyacyl-[acyl-carrier-protein] dehydratase FabZ (150 aa).

The active site involves His54.

The protein belongs to the thioester dehydratase family. FabZ subfamily.

It localises to the cytoplasm. It carries out the reaction a (3R)-hydroxyacyl-[ACP] = a (2E)-enoyl-[ACP] + H2O. Functionally, involved in unsaturated fatty acids biosynthesis. Catalyzes the dehydration of short chain beta-hydroxyacyl-ACPs and long chain saturated and unsaturated beta-hydroxyacyl-ACPs. This is 3-hydroxyacyl-[acyl-carrier-protein] dehydratase FabZ from Pseudoalteromonas translucida (strain TAC 125).